The primary structure comprises 162 residues: Nucleotide-binding protein CHU_2278 (162 aa).

This sequence belongs to the YajQ family.

Nucleotide-binding protein. This is Nucleotide-binding protein CHU_2278 from Cytophaga hutchinsonii (strain ATCC 33406 / DSM 1761 / CIP 103989 / NBRC 15051 / NCIMB 9469 / D465).